Reading from the N-terminus, the 264-residue chain is 3-methyl-2-oxobutanoate hydroxymethyltransferase (264 aa).

The Mg(2+) site is built by Asp-45 and Asp-84. Residues 45–46, Asp-84, and Lys-113 each bind 3-methyl-2-oxobutanoate; that span reads DS. A Mg(2+)-binding site is contributed by Glu-115. Glu-182 acts as the Proton acceptor in catalysis.

The protein belongs to the PanB family. As to quaternary structure, homodecamer; pentamer of dimers. Requires Mg(2+) as cofactor.

The protein resides in the cytoplasm. The catalysed reaction is 3-methyl-2-oxobutanoate + (6R)-5,10-methylene-5,6,7,8-tetrahydrofolate + H2O = 2-dehydropantoate + (6S)-5,6,7,8-tetrahydrofolate. It functions in the pathway cofactor biosynthesis; (R)-pantothenate biosynthesis; (R)-pantoate from 3-methyl-2-oxobutanoate: step 1/2. Functionally, catalyzes the reversible reaction in which hydroxymethyl group from 5,10-methylenetetrahydrofolate is transferred onto alpha-ketoisovalerate to form ketopantoate. The chain is 3-methyl-2-oxobutanoate hydroxymethyltransferase from Nitrosococcus oceani (strain ATCC 19707 / BCRC 17464 / JCM 30415 / NCIMB 11848 / C-107).